Consider the following 198-residue polypeptide: Syndecan-4 (198 aa).

The first 18 residues, M1–A18, serve as a signal peptide directing secretion. The Extracellular segment spans residues E19–E145. Residues S39, S61, and S63 are each glycosylated (O-linked (Xyl...) (glycosaminoglycan) serine). S95 carries an O-linked (Xyl...) (chondroitin sulfate) serine glycan. The chain crosses the membrane as a helical span at residues V146–Y170. Topologically, residues R171–A198 are cytoplasmic.

It belongs to the syndecan proteoglycan family. As to quaternary structure, homodimer. Interacts with CDCP1 and SDCBP. Interacts (via its cytoplasmic domain) with GIPC (via its PDZ domain). Interacts (via its cytoplasmic domain) with NUDT16L1. Interacts with DNM2; this interaction is markedly enhanced at focal ahesion site upon induction of focal adhesions and stress-fiber formation. Shedding is enhanced by a number of factors such as heparanase, thrombin or EGF. Also by stress and wound healing. PMA-mediated shedding is inhibited by TIMP3. Post-translationally, O-glycosylated; contains both chondroitin sulfate and heparan sulfate. Ser-39, Ser-61 and Ser-63 can all be modified by either chondroitin sulfate or heparan sulfate, and the protein exists in forms that contain only chondroitin sulfate, only heparan sulfate and both chondroitin sulfate and heparan sulfate.

The protein localises to the membrane. It is found in the secreted. In terms of biological role, cell surface proteoglycan which regulates exosome biogenesis in concert with SDCBP and PDCD6IP. The polypeptide is Syndecan-4 (Pongo abelii (Sumatran orangutan)).